A 151-amino-acid polypeptide reads, in one-letter code: Snaclec 3 (151 aa).

The first 23 residues, 1–23, serve as a signal peptide directing secretion; the sequence is MGRLVFVSFSLLVVFLSLSGTAA. Cystine bridges form between Cys-25/Cys-36, Cys-53/Cys-149, and Cys-125/Cys-141. In terms of domain architecture, C-type lectin spans 32-150; the sequence is YEGHCYKPFN…CGEINPFVCK (119 aa).

Belongs to the snaclec family. Heterodimer; disulfide-linked. Expressed by the venom gland.

It is found in the secreted. In terms of biological role, interferes with one step of hemostasis (modulation of platelet aggregation, or coagulation cascade, for example). This Sistrurus catenatus edwardsii (Desert massasauga) protein is Snaclec 3.